The sequence spans 204 residues: Holliday junction branch migration complex subunit RuvA (204 aa).

A domain I region spans residues 1 to 64; it reads MIGRLCGTAE…EDAITLFGFI (64 aa). The segment at 65–143 is domain II; it reads DAAERDWFRL…AMPTGSAFIP (79 aa). The flexible linker stretch occupies residues 144–154; that stretch reads TGTAPPVAPPQ. Positions 154 to 204 are domain III; it reads QGKLADALSALVNLGYRRAEAEAALSAVQAEAGEDAALDELIRGGLRRLAR.

It belongs to the RuvA family. Homotetramer. Forms an RuvA(8)-RuvB(12)-Holliday junction (HJ) complex. HJ DNA is sandwiched between 2 RuvA tetramers; dsDNA enters through RuvA and exits via RuvB. An RuvB hexamer assembles on each DNA strand where it exits the tetramer. Each RuvB hexamer is contacted by two RuvA subunits (via domain III) on 2 adjacent RuvB subunits; this complex drives branch migration. In the full resolvosome a probable DNA-RuvA(4)-RuvB(12)-RuvC(2) complex forms which resolves the HJ.

It is found in the cytoplasm. Functionally, the RuvA-RuvB-RuvC complex processes Holliday junction (HJ) DNA during genetic recombination and DNA repair, while the RuvA-RuvB complex plays an important role in the rescue of blocked DNA replication forks via replication fork reversal (RFR). RuvA specifically binds to HJ cruciform DNA, conferring on it an open structure. The RuvB hexamer acts as an ATP-dependent pump, pulling dsDNA into and through the RuvAB complex. HJ branch migration allows RuvC to scan DNA until it finds its consensus sequence, where it cleaves and resolves the cruciform DNA. This chain is Holliday junction branch migration complex subunit RuvA, found in Acidiphilium cryptum (strain JF-5).